A 147-amino-acid polypeptide reads, in one-letter code: Large ribosomal subunit protein uL11 (147 aa).

The protein belongs to the universal ribosomal protein uL11 family. In terms of assembly, part of the ribosomal stalk of the 50S ribosomal subunit. Interacts with L10 and the large rRNA to form the base of the stalk. L10 forms an elongated spine to which L12 dimers bind in a sequential fashion forming a multimeric L10(L12)X complex. One or more lysine residues are methylated.

Its function is as follows. Forms part of the ribosomal stalk which helps the ribosome interact with GTP-bound translation factors. This is Large ribosomal subunit protein uL11 from Thermus thermophilus (strain ATCC BAA-163 / DSM 7039 / HB27).